Here is a 315-residue protein sequence, read N- to C-terminus: Glutaminase (315 aa).

Residues S70, N120, E166, N173, Y197, Y249, and V267 each contribute to the substrate site.

It belongs to the glutaminase family. As to quaternary structure, homotetramer.

The enzyme catalyses L-glutamine + H2O = L-glutamate + NH4(+). The protein is Glutaminase of Rhizobium meliloti (strain 1021) (Ensifer meliloti).